Here is a 1299-residue protein sequence, read N- to C-terminus: Tenascin-N (1299 aa).

A signal peptide spans 1–28 (MSLQEMFRFPMGLLLGSVLLVASAPATL). EGF-like domains are found at residues 167 to 198 (ERLA…ADCG), 199 to 229 (YPAC…EDCS), and 230 to 260 (EKRC…LDCA). 9 disulfides stabilise this stretch: cysteine 171–cysteine 181, cysteine 175–cysteine 186, cysteine 188–cysteine 197, cysteine 202–cysteine 212, cysteine 206–cysteine 217, cysteine 219–cysteine 228, cysteine 233–cysteine 243, cysteine 237–cysteine 248, and cysteine 250–cysteine 259. 9 consecutive Fibronectin type-III domains span residues 264–352 (TPQG…TDLA), 353–444 (VLGT…TEID), 445–532 (SPTN…TEID), 533–623 (SPAN…IDSP), 624–709 (KNLV…TDID), 710–800 (SPQN…IDSP), 801–886 (QNLV…TEID), 887–976 (GPKN…LDPP), and 977–1063 (RNLR…VGAR). The tract at residues 605-624 (GDRESKKADTNAPTDIDSPK) is disordered. Positions 960–977 (QESKKADTKAQTELDPPR) are enriched in basic and acidic residues. The segment at 960–982 (QESKKADTKAQTELDPPRNLRPS) is disordered. The region spanning 1061 to 1278 (GARFPHPSDC…YVELKIRPHG (218 aa)) is the Fibrinogen C-terminal domain. A glycan (N-linked (GlcNAc...) asparagine) is linked at asparagine 1149.

This sequence belongs to the tenascin family. As to quaternary structure, homohexamer. As to expression, not detected in normal adult mammary tissues or brain but expressed in most breast tumors and brain tumors, such as glioblastomas, astrocytomas and oligodendrogliomas, tested. In brain tumors, detected around the endothelial cell layer of the clood vessels.

The protein resides in the secreted. Its subcellular location is the extracellular space. It is found in the extracellular matrix. Extracellular matrix protein that seems to be a ligand for ITGA8:ITGB1, ITGAV:ITGB1 and ITGA4:ITGB1. Involved in neurite outgrowth and cell migration in hippocampal explants. During endochondral bone formation, inhibits proliferation and differentiation of proteoblasts mediated by canonical WNT signaling. In tumors, stimulates angiogenesis by elongation, migration and sprouting of endothelial cells. Expressed in most mammary tumors, may facilitate tumorigenesis by supporting the migratory behavior of breast cancer cells. The sequence is that of Tenascin-N from Homo sapiens (Human).